We begin with the raw amino-acid sequence, 342 residues long: MTSLTLALDAMGGDHGPHVTVPAALRALKSHSSLKIILVGDKTEIDVYLRQAEQPLLSRIEVIHTDEVVSMSDRPVHALRTRKNSSMRLSIELVRDGRAAACVSAGNTGALMAMAKVLLKTLPGVDRPALVSCLPSVTQKPVYLLDLGANISCDSETLFQFAVMGSVLCEAVDKKSRPKVALLNVGTEEIKGNDQVQQAAQILQNTDQINYTGFIEGDEIYSGNVDVIVCDGFVGNITLKTSEGIAKLLVHQLKRGLTQGFFVRFLAKLIAPRIQAVLSQMNPDHYNGASLIGLRGIVVKSHGNADETAYLQAINLAVTEAQRRLPEMIKDRLESILLDINN.

It belongs to the PlsX family. In terms of assembly, homodimer. Probably interacts with PlsY.

The protein localises to the cytoplasm. The catalysed reaction is a fatty acyl-[ACP] + phosphate = an acyl phosphate + holo-[ACP]. The protein operates within lipid metabolism; phospholipid metabolism. Its function is as follows. Catalyzes the reversible formation of acyl-phosphate (acyl-PO(4)) from acyl-[acyl-carrier-protein] (acyl-ACP). This enzyme utilizes acyl-ACP as fatty acyl donor, but not acyl-CoA. The polypeptide is Phosphate acyltransferase (Shewanella sp. (strain MR-4)).